A 233-amino-acid chain; its full sequence is Transmembrane protein 40 (233 aa).

The residue at position 1 (methionine 1) is an N-acetylmethionine. Residues 1-14 show a composition bias toward polar residues; the sequence is METSASSSQPQDNS. Residues 1–143 are disordered; it reads METSASSSQP…RRGSDPASGE (143 aa). Residues 50-70 show a composition bias toward low complexity; that stretch reads SSSSSSSSSSSSSSSSSSSSS. Over residues 93–104 the composition is skewed to gly residues; that stretch reads YPHGNGSPGPGH. Positions 105–114 are enriched in basic and acidic residues; that stretch reads GEPDVLKDEL. The residue at position 137 (serine 137) is a Phosphoserine. A run of 2 helical transmembrane segments spans residues 160 to 180 and 187 to 207; these read FFHFVLLCFAIGALLVCYHYY and LGVGLLTFASLETVGIYFGLV.

The protein localises to the membrane. The polypeptide is Transmembrane protein 40 (TMEM40) (Homo sapiens (Human)).